Reading from the N-terminus, the 144-residue chain is VISAEIMQVHHQKHHATYVNNLNAAEEQLAEAIHKQDVTKMIALQSAIKFNGGGHINHSIFWNNLCPSGGGEPTGPLAEAITRDFGSFEAFKEKMTAATVAVQGSGWGWLGLDPTSKKLRIVACPNQDPLEGTTGLKPLLGIDV.

Mn(2+)-binding residues include histidine 10, histidine 58, and aspartate 143.

This sequence belongs to the iron/manganese superoxide dismutase family. As to quaternary structure, homotetramer. Mn(2+) is required as a cofactor.

The protein resides in the mitochondrion matrix. The catalysed reaction is 2 superoxide + 2 H(+) = H2O2 + O2. Destroys superoxide anion radicals which are normally produced within the cells and which are toxic to biological systems. This Branchiostoma floridae (Florida lancelet) protein is Superoxide dismutase [Mn], mitochondrial.